The sequence spans 856 residues: Protein translocase subunit SecA (856 aa).

Residues Q77, 95-99 (GEGKT), and D534 each bind ATP.

The protein belongs to the SecA family. Monomer and homodimer. Part of the essential Sec protein translocation apparatus which comprises SecA, SecYEG and auxiliary proteins SecDF. Other proteins may also be involved.

It is found in the cell inner membrane. The protein resides in the cytoplasm. It catalyses the reaction ATP + H2O + cellular proteinSide 1 = ADP + phosphate + cellular proteinSide 2.. Its function is as follows. Part of the Sec protein translocase complex. Interacts with the SecYEG preprotein conducting channel. Has a central role in coupling the hydrolysis of ATP to the transfer of proteins into and across the cell membrane, serving as an ATP-driven molecular motor driving the stepwise translocation of polypeptide chains across the membrane. The sequence is that of Protein translocase subunit SecA from Thermosipho africanus (strain TCF52B).